The chain runs to 320 residues: ATP synthase gamma chain (320 aa).

The protein belongs to the ATPase gamma chain family. F-type ATPases have 2 components, CF(1) - the catalytic core - and CF(0) - the membrane proton channel. CF(1) has five subunits: alpha(3), beta(3), gamma(1), delta(1), epsilon(1). CF(0) has three main subunits: a, b and c.

The protein resides in the cell membrane. Its function is as follows. Produces ATP from ADP in the presence of a proton gradient across the membrane. The gamma chain is believed to be important in regulating ATPase activity and the flow of protons through the CF(0) complex. This is ATP synthase gamma chain from Lactobacillus helveticus (strain DPC 4571).